The primary structure comprises 427 residues: MDQIVIRGGQRLKGRIPISGAKNAALTLLPCALLTDEPLTLRNLPRLADVDGFGHLLNQLGCSTTIEGSRPEDFGRVMTARATTLTSTVAPYDIVRKMRASILVLGPLLARAGEATVSLPGGCAIGNRPIDLHLKALEAFGAEIELASGYVKAVAAGGRLAGGRFTFPVVSVGATENAVMAAVLAKGTCVLENAAREPEIVDLCNCLVAMGAHIEGIGTETLTIEGVDRLHGATYRVMADRIEAGSYACAAVITEGDVELVGAKASEMEATLAALREAGATVEETKGGIRVAMAGRAQPVTLSTAPYPGFATDMQAQFMAMATLGTGASLFTETIFENRYMHVPELARMGCDIQVKGRTAVVRGVDRLIGAPVMATDLRASMSLIIAGLAAEGTTEVNRVYHLDRGYERLEEKLQAVGADIERISAG.

22–23 is a binding site for phosphoenolpyruvate; that stretch reads KN. Arg99 is a UDP-N-acetyl-alpha-D-glucosamine binding site. Cys123 functions as the Proton donor in the catalytic mechanism. Cys123 carries the post-translational modification 2-(S-cysteinyl)pyruvic acid O-phosphothioketal. Residues 128–132, Asp313, and Ile335 contribute to the UDP-N-acetyl-alpha-D-glucosamine site; that span reads RPIDL.

It belongs to the EPSP synthase family. MurA subfamily.

Its subcellular location is the cytoplasm. It carries out the reaction phosphoenolpyruvate + UDP-N-acetyl-alpha-D-glucosamine = UDP-N-acetyl-3-O-(1-carboxyvinyl)-alpha-D-glucosamine + phosphate. It functions in the pathway cell wall biogenesis; peptidoglycan biosynthesis. In terms of biological role, cell wall formation. Adds enolpyruvyl to UDP-N-acetylglucosamine. This chain is UDP-N-acetylglucosamine 1-carboxyvinyltransferase, found in Sphingopyxis alaskensis (strain DSM 13593 / LMG 18877 / RB2256) (Sphingomonas alaskensis).